The chain runs to 159 residues: MNIIQSGINVKNASITIIIARFNEFINKNLLSGAIDTLTRIGQIDKEKILTIYVPGTYEIPIVASYIANTNKYDAIIAIGTIIKGSTDHFKHIANDAYSNLSRISTKYFIPITMGILTTENIQQSIERSGTKMGNKGSEAALAALEMINIMKKLKKINN.

5-amino-6-(D-ribitylamino)uracil is bound by residues F22, T57–E59, and T81–I83. Residue S86–T87 coordinates (2S)-2-hydroxy-3-oxobutyl phosphate. Catalysis depends on H89, which acts as the Proton donor. Position 114 (M114) interacts with 5-amino-6-(D-ribitylamino)uracil. A (2S)-2-hydroxy-3-oxobutyl phosphate-binding site is contributed by R128.

It belongs to the DMRL synthase family. In terms of assembly, forms an icosahedral capsid composed of 60 subunits, arranged as a dodecamer of pentamers.

It catalyses the reaction (2S)-2-hydroxy-3-oxobutyl phosphate + 5-amino-6-(D-ribitylamino)uracil = 6,7-dimethyl-8-(1-D-ribityl)lumazine + phosphate + 2 H2O + H(+). It functions in the pathway cofactor biosynthesis; riboflavin biosynthesis; riboflavin from 2-hydroxy-3-oxobutyl phosphate and 5-amino-6-(D-ribitylamino)uracil: step 1/2. Catalyzes the formation of 6,7-dimethyl-8-ribityllumazine by condensation of 5-amino-6-(D-ribitylamino)uracil with 3,4-dihydroxy-2-butanone 4-phosphate. This is the penultimate step in the biosynthesis of riboflavin. The chain is 6,7-dimethyl-8-ribityllumazine synthase from Buchnera aphidicola subsp. Schizaphis graminum (strain Sg).